Here is a 91-residue protein sequence, read N- to C-terminus: Small ribosomal subunit protein uS15 (91 aa).

Belongs to the universal ribosomal protein uS15 family. Part of the 30S ribosomal subunit. Forms a bridge to the 50S subunit in the 70S ribosome, contacting the 23S rRNA.

One of the primary rRNA binding proteins, it binds directly to 16S rRNA where it helps nucleate assembly of the platform of the 30S subunit by binding and bridging several RNA helices of the 16S rRNA. Its function is as follows. Forms an intersubunit bridge (bridge B4) with the 23S rRNA of the 50S subunit in the ribosome. This Rickettsia canadensis (strain McKiel) protein is Small ribosomal subunit protein uS15.